The following is a 211-amino-acid chain: Uracil phosphoribosyltransferase (211 aa).

30–34 (KGLVR) provides a ligand contact to GTP. 5-phospho-alpha-D-ribose 1-diphosphate-binding positions include R79, R104, and 133–141 (DPMLATGTT). Uracil is bound by residues I197 and 202–204 (GDA). D203 is a 5-phospho-alpha-D-ribose 1-diphosphate binding site.

This sequence belongs to the UPRTase family. The cofactor is Mg(2+).

The catalysed reaction is UMP + diphosphate = 5-phospho-alpha-D-ribose 1-diphosphate + uracil. Its pathway is pyrimidine metabolism; UMP biosynthesis via salvage pathway; UMP from uracil: step 1/1. Its activity is regulated as follows. Allosterically activated by GTP. In terms of biological role, catalyzes the conversion of uracil and 5-phospho-alpha-D-ribose 1-diphosphate (PRPP) to UMP and diphosphate. The sequence is that of Uracil phosphoribosyltransferase from Pyrobaculum arsenaticum (strain DSM 13514 / JCM 11321 / PZ6).